Here is a 446-residue protein sequence, read N- to C-terminus: MITIKKGLDLPIAGTPSQVISDGKAIKKVALLGEEYVGMRPTMHVRVGDEVKKAQILFEDKKNPGVKFTSPVSGKVVEINRGAKRVLQSVVIEVAGDDQVTFDKFEANQLASLNRDAIKTQLVESGLWTAFRTRPFSKVPAIDSTSEAIFVTAMDTNPLAAEPTVVINEQSEAFVAGLDVLSALTTGKVYVCKKGTSLPRSQQPNVEEHVFDGPHPAGLAGTHMHFLYPVSADHVAWSINYQDVIAVGQLFLTGELYTQRVVSLAGPVVNKPRLVRTVMGASLEQLVDSEIMPGEVRIISGSVLSGTKATGPHAYLGRYHLQVSVLREGRDKELFGWAMPGKNKFSVTRSFLGHLFKGQVYNMTTTTNGSDRSMVPIGNYEKVMPLDMEPTLLLRDLCAGDSDSAVRLGALELDEEDLALCTFVCPGKYEYGQLLRECLDKIEKEG.

The protein belongs to the NqrA family. As to quaternary structure, composed of six subunits; NqrA, NqrB, NqrC, NqrD, NqrE and NqrF.

It carries out the reaction a ubiquinone + n Na(+)(in) + NADH + H(+) = a ubiquinol + n Na(+)(out) + NAD(+). NQR complex catalyzes the reduction of ubiquinone-1 to ubiquinol by two successive reactions, coupled with the transport of Na(+) ions from the cytoplasm to the periplasm. NqrA to NqrE are probably involved in the second step, the conversion of ubisemiquinone to ubiquinol. The chain is Na(+)-translocating NADH-quinone reductase subunit A from Vibrio cholerae serotype O1 (strain ATCC 39541 / Classical Ogawa 395 / O395).